Consider the following 237-residue polypeptide: MRPSKRAPEELRKVTLERGVARYAEGSCLVTFGETRVLCTASLEERGPSWLRGSGKGWITAEYAMLPRATHERNRREVNAGKPSGRTQEIQRLIGRSLRAVVNLPAIGERQIVIDCDVLQADGGTRTASITGAWVALHECFTWMRSRSIISVDPMRDHVAAVSCGIHKGTPILDLDYAEDSAAETDANFVITGSGGIVEVQGTAEVTPFSEEEFLGLLRLAKSGVAQLVALQKQAVG.

Phosphate-binding positions include arginine 86 and 124 to 126 (GTR).

This sequence belongs to the RNase PH family. As to quaternary structure, homohexameric ring arranged as a trimer of dimers.

It carries out the reaction tRNA(n+1) + phosphate = tRNA(n) + a ribonucleoside 5'-diphosphate. Phosphorolytic 3'-5' exoribonuclease that plays an important role in tRNA 3'-end maturation. Removes nucleotide residues following the 3'-CCA terminus of tRNAs; can also add nucleotides to the ends of RNA molecules by using nucleoside diphosphates as substrates, but this may not be physiologically important. Probably plays a role in initiation of 16S rRNA degradation (leading to ribosome degradation) during starvation. This Methylobacterium nodulans (strain LMG 21967 / CNCM I-2342 / ORS 2060) protein is Ribonuclease PH.